The sequence spans 284 residues: 4-diphosphocytidyl-2-C-methyl-D-erythritol kinase (284 aa).

Residue K9 is part of the active site. Residue 92–102 (PMGGGIGGGSS) coordinates ATP. Residue D134 is part of the active site.

Belongs to the GHMP kinase family. IspE subfamily.

The catalysed reaction is 4-CDP-2-C-methyl-D-erythritol + ATP = 4-CDP-2-C-methyl-D-erythritol 2-phosphate + ADP + H(+). It participates in isoprenoid biosynthesis; isopentenyl diphosphate biosynthesis via DXP pathway; isopentenyl diphosphate from 1-deoxy-D-xylulose 5-phosphate: step 3/6. Functionally, catalyzes the phosphorylation of the position 2 hydroxy group of 4-diphosphocytidyl-2C-methyl-D-erythritol. This Stutzerimonas stutzeri (strain A1501) (Pseudomonas stutzeri) protein is 4-diphosphocytidyl-2-C-methyl-D-erythritol kinase.